We begin with the raw amino-acid sequence, 338 residues long: 3-dehydroquinate synthase (338 aa).

NAD(+) contacts are provided by residues aspartate 58–lysine 63, glycine 92–aspartate 96, threonine 116–threonine 117, lysine 129, and lysine 138. Zn(2+) contacts are provided by glutamate 169, histidine 229, and histidine 245.

Belongs to the sugar phosphate cyclases superfamily. Dehydroquinate synthase family. NAD(+) is required as a cofactor. It depends on Co(2+) as a cofactor. The cofactor is Zn(2+).

The protein localises to the cytoplasm. The enzyme catalyses 7-phospho-2-dehydro-3-deoxy-D-arabino-heptonate = 3-dehydroquinate + phosphate. It functions in the pathway metabolic intermediate biosynthesis; chorismate biosynthesis; chorismate from D-erythrose 4-phosphate and phosphoenolpyruvate: step 2/7. Functionally, catalyzes the conversion of 3-deoxy-D-arabino-heptulosonate 7-phosphate (DAHP) to dehydroquinate (DHQ). In Picrophilus torridus (strain ATCC 700027 / DSM 9790 / JCM 10055 / NBRC 100828 / KAW 2/3), this protein is 3-dehydroquinate synthase.